The chain runs to 68 residues: Non-specific lipid-transfer protein 2 (68 aa).

Belongs to the plant LTP family.

Its function is as follows. Plant non-specific lipid-transfer proteins transfer phospholipids as well as galactolipids across membranes. May play a role in wax or cutin deposition in the cell walls of expanding epidermal cells and certain secretory tissues. This is Non-specific lipid-transfer protein 2 from Prunus armeniaca (Apricot).